The chain runs to 656 residues: Very long-chain specific acyl-CoA dehydrogenase, mitochondrial (656 aa).

The disordered stretch occupies residues 1-33; that stretch reads MQSARMTPSVGRQLLRLGARSSRSTTVLQGQPR. A mitochondrion-targeting transit peptide spans 1–41; the sequence is MQSARMTPSVGRQLLRLGARSSRSTTVLQGQPRPISAQRLY. Positions 42 to 483 are catalytic; that stretch reads AREATQAVLD…ALQGCMDKGK (442 aa). Lys52 is modified (N6-acetyllysine). N6-acetyllysine; alternate occurs at positions 72 and 128. N6-succinyllysine; alternate is present on residues Lys72 and Lys128. Lys196 carries the N6-succinyllysine modification. 215 to 224 provides a ligand contact to FAD; that stretch reads FCLTEPSSGS. S-nitrosocysteine is present on Cys238. Lys240 carries the post-translational modification N6-acetyllysine; alternate. Lys240 is modified (N6-succinyllysine; alternate). An FAD-binding site is contributed by 250-252; sequence WIS. Lys269 carries the N6-succinyllysine modification. Lys277 and Lys279 each carry N6-acetyllysine; alternate. Lys277 and Lys279 each carry N6-succinyllysine; alternate. 2 positions are modified to N6-acetyllysine: Lys299 and Lys317. N6-acetyllysine; alternate is present on Lys332. An N6-succinyllysine; alternate modification is found at Lys332. At Lys373 the chain carries N6-succinyllysine. 462-464 is a substrate binding site; that stretch reads FEG. The Proton acceptor role is filled by Glu463. 465-467 is an FAD binding site; the sequence is AND. Residue Lys483 is modified to N6-acetyllysine; alternate. Lys483 carries the N6-succinyllysine; alternate modification. The interval 484 to 517 is membrane-anchoring; the sequence is ELTGLGNALKNPFGNVGLLMGEAGKQLRRRTGIG. Phosphoserine is present on residues Ser518 and Ser523. At Lys551 the chain carries N6-acetyllysine. Lys557 carries the post-translational modification N6-acetyllysine; alternate. Lys557 carries the post-translational modification N6-succinyllysine; alternate. Gln563 contacts FAD. Lys640 is subject to N6-succinyllysine.

The protein belongs to the acyl-CoA dehydrogenase family. As to quaternary structure, homodimer. Homodimerizes after import into the mitochondrion. FAD is required as a cofactor. In terms of processing, S-nitrosylation at Cys-238 in liver improves catalytic efficiency.

The protein localises to the mitochondrion inner membrane. It catalyses the reaction a very-long-chain 2,3-saturated fatty acyl-CoA + oxidized [electron-transfer flavoprotein] + H(+) = a very-long-chain (2E)-enoyl-CoA + reduced [electron-transfer flavoprotein]. It carries out the reaction dodecanoyl-CoA + oxidized [electron-transfer flavoprotein] + H(+) = (2E)-dodecenoyl-CoA + reduced [electron-transfer flavoprotein]. The enzyme catalyses tetradecanoyl-CoA + oxidized [electron-transfer flavoprotein] + H(+) = (2E)-tetradecenoyl-CoA + reduced [electron-transfer flavoprotein]. The catalysed reaction is oxidized [electron-transfer flavoprotein] + hexadecanoyl-CoA + H(+) = (2E)-hexadecenoyl-CoA + reduced [electron-transfer flavoprotein]. It catalyses the reaction octadecanoyl-CoA + oxidized [electron-transfer flavoprotein] + H(+) = (2E)-octadecenoyl-CoA + reduced [electron-transfer flavoprotein]. It carries out the reaction eicosanoyl-CoA + oxidized [electron-transfer flavoprotein] + H(+) = (2E)-eicosenoyl-CoA + reduced [electron-transfer flavoprotein]. The enzyme catalyses docosanoyl-CoA + oxidized [electron-transfer flavoprotein] + H(+) = (2E)-docosenoyl-CoA + reduced [electron-transfer flavoprotein]. The catalysed reaction is tetracosanoyl-CoA + oxidized [electron-transfer flavoprotein] + H(+) = (2E)-tetracosenoyl-CoA + reduced [electron-transfer flavoprotein]. It functions in the pathway lipid metabolism; mitochondrial fatty acid beta-oxidation. Its function is as follows. Very long-chain specific acyl-CoA dehydrogenase is one of the acyl-CoA dehydrogenases that catalyze the first step of mitochondrial fatty acid beta-oxidation, an aerobic process breaking down fatty acids into acetyl-CoA and allowing the production of energy from fats. The first step of fatty acid beta-oxidation consists in the removal of one hydrogen from C-2 and C-3 of the straight-chain fatty acyl-CoA thioester, resulting in the formation of trans-2-enoyl-CoA. Among the different mitochondrial acyl-CoA dehydrogenases, very long-chain specific acyl-CoA dehydrogenase acts specifically on acyl-CoAs with saturated 12 to 24 carbons long primary chains. The protein is Very long-chain specific acyl-CoA dehydrogenase, mitochondrial of Mus musculus (Mouse).